A 166-amino-acid polypeptide reads, in one-letter code: MFKKLFGKGKEVQKDIAIYAPLTGEYVKIEDIPDPVFAQKMMGEGFGINPTEGEVVSPIAGRVDNVFPTKHAIGLKADNGLELLVHIGLDTVQLDGEGFEVLVSSGDEVNVGDPLVRFNLEYINNNAKSVISPIIITNTDQAASINIYDENAVIKGETKVIDVTMN.

Positions 34 to 138 (DPVFAQKMMG…SVISPIIITN (105 aa)) constitute a PTS EIIA type-1 domain. Residues histidine 71 and histidine 86 each contribute to the Zn(2+) site. Residue histidine 86 is the Tele-phosphohistidine intermediate; for EIIA activity of the active site. Histidine 86 bears the Phosphohistidine; by HPr mark.

In terms of assembly, heterodimer with glycerol kinase (glpk). Requires Zn(2+) as cofactor.

The protein resides in the cytoplasm. In terms of biological role, the phosphoenolpyruvate-dependent sugar phosphotransferase system (sugar PTS), a major carbohydrate active transport system, catalyzes the phosphorylation of incoming sugar substrates concomitantly with their translocation across the cell membrane. The enzyme II complex composed of PtsG and Crr is involved in glucose transport. In Staphylococcus aureus (strain MRSA252), this protein is PTS system glucose-specific EIIA component (crr).